The chain runs to 95 residues: Co-chaperonin GroES (95 aa).

The protein belongs to the GroES chaperonin family. Heptamer of 7 subunits arranged in a ring. Interacts with the chaperonin GroEL.

It localises to the cytoplasm. Its function is as follows. Together with the chaperonin GroEL, plays an essential role in assisting protein folding. The GroEL-GroES system forms a nano-cage that allows encapsulation of the non-native substrate proteins and provides a physical environment optimized to promote and accelerate protein folding. GroES binds to the apical surface of the GroEL ring, thereby capping the opening of the GroEL channel. The sequence is that of Co-chaperonin GroES from Cereibacter sphaeroides (strain KD131 / KCTC 12085) (Rhodobacter sphaeroides).